Here is a 282-residue protein sequence, read N- to C-terminus: Phosphatidylserine decarboxylase proenzyme (282 aa).

Active-site charge relay system; for autoendoproteolytic cleavage activity residues include aspartate 85, histidine 142, and serine 244. Serine 244 (schiff-base intermediate with substrate; via pyruvic acid; for decarboxylase activity) is an active-site residue. Pyruvic acid (Ser); by autocatalysis is present on serine 244.

It belongs to the phosphatidylserine decarboxylase family. PSD-B subfamily. Prokaryotic type I sub-subfamily. As to quaternary structure, heterodimer of a large membrane-associated beta subunit and a small pyruvoyl-containing alpha subunit. Pyruvate is required as a cofactor. Post-translationally, is synthesized initially as an inactive proenzyme. Formation of the active enzyme involves a self-maturation process in which the active site pyruvoyl group is generated from an internal serine residue via an autocatalytic post-translational modification. Two non-identical subunits are generated from the proenzyme in this reaction, and the pyruvate is formed at the N-terminus of the alpha chain, which is derived from the carboxyl end of the proenzyme. The autoendoproteolytic cleavage occurs by a canonical serine protease mechanism, in which the side chain hydroxyl group of the serine supplies its oxygen atom to form the C-terminus of the beta chain, while the remainder of the serine residue undergoes an oxidative deamination to produce ammonia and the pyruvoyl prosthetic group on the alpha chain. During this reaction, the Ser that is part of the protease active site of the proenzyme becomes the pyruvoyl prosthetic group, which constitutes an essential element of the active site of the mature decarboxylase.

Its subcellular location is the cell membrane. It catalyses the reaction a 1,2-diacyl-sn-glycero-3-phospho-L-serine + H(+) = a 1,2-diacyl-sn-glycero-3-phosphoethanolamine + CO2. It participates in phospholipid metabolism; phosphatidylethanolamine biosynthesis; phosphatidylethanolamine from CDP-diacylglycerol: step 2/2. Its function is as follows. Catalyzes the formation of phosphatidylethanolamine (PtdEtn) from phosphatidylserine (PtdSer). The polypeptide is Phosphatidylserine decarboxylase proenzyme (Coxiella burnetii (strain Dugway 5J108-111)).